A 45-amino-acid chain; its full sequence is Globin, minor monomeric component (45 aa).

The Globin domain maps to 1–45; it reads GLSAAERQVVASCWKDIAGADXGAGVGKEXLIKFISAAPEMAAVF.

Belongs to the globin family. In terms of assembly, monomer.

This Glycera dibranchiata (Bloodworm) protein is Globin, minor monomeric component.